A 207-amino-acid polypeptide reads, in one-letter code: Imidazoleglycerol-phosphate dehydratase (207 aa).

This sequence belongs to the imidazoleglycerol-phosphate dehydratase family.

It is found in the cytoplasm. The enzyme catalyses D-erythro-1-(imidazol-4-yl)glycerol 3-phosphate = 3-(imidazol-4-yl)-2-oxopropyl phosphate + H2O. The protein operates within amino-acid biosynthesis; L-histidine biosynthesis; L-histidine from 5-phospho-alpha-D-ribose 1-diphosphate: step 6/9. In Azospirillum brasilense, this protein is Imidazoleglycerol-phosphate dehydratase (hisB).